The chain runs to 303 residues: MTSRFRHVALIGKYQASGARAQADARDGVMEDIGAFLESQGCEVFVEKSAAEEADADASVGGRYQPLTVEEIGQRCDLGLVVGGDGTMLGIGRQLACYGIPLIGINRGRLGFITDIPLDNYQATLIPMLAGEYEEDHRSLMHAQVMRDGASVFDALAMNDVVVNRGATSGMVELRVSVGRHFVANQRADGLIIASPTGSTAYALSAGGPLLHPAVPGWVLVPIAPHTLSNRPVLLPDADEIVIELVAGRDASANFDMQSLASLAIGDRVVVRRSDFRVRFLHPRGWSYFDTLRKKLHWNEGGS.

The Proton acceptor role is filled by Asp-85. NAD(+)-binding positions include 85 to 86 (DG), 159 to 160 (ND), Arg-187, Asp-189, 200 to 205 (TAYALS), Ala-224, and Gln-258.

This sequence belongs to the NAD kinase family. A divalent metal cation serves as cofactor.

The protein resides in the cytoplasm. It catalyses the reaction NAD(+) + ATP = ADP + NADP(+) + H(+). Involved in the regulation of the intracellular balance of NAD and NADP, and is a key enzyme in the biosynthesis of NADP. Catalyzes specifically the phosphorylation on 2'-hydroxyl of the adenosine moiety of NAD to yield NADP. This Variovorax paradoxus (strain S110) protein is NAD kinase.